A 451-amino-acid polypeptide reads, in one-letter code: Phosphoglucosamine mutase (451 aa).

The active-site Phosphoserine intermediate is the Ser-102. Mg(2+) contacts are provided by Ser-102, Asp-242, Asp-244, and Asp-246. Ser-102 bears the Phosphoserine mark.

The protein belongs to the phosphohexose mutase family. It depends on Mg(2+) as a cofactor. Activated by phosphorylation.

It catalyses the reaction alpha-D-glucosamine 1-phosphate = D-glucosamine 6-phosphate. In terms of biological role, catalyzes the conversion of glucosamine-6-phosphate to glucosamine-1-phosphate. This Staphylococcus carnosus (strain TM300) protein is Phosphoglucosamine mutase.